The following is a 233-amino-acid chain: Uracil-DNA glycosylase (233 aa).

The active-site Proton acceptor is Asp-70.

The protein belongs to the uracil-DNA glycosylase (UDG) superfamily. UNG family.

Its subcellular location is the cytoplasm. The catalysed reaction is Hydrolyzes single-stranded DNA or mismatched double-stranded DNA and polynucleotides, releasing free uracil.. In terms of biological role, excises uracil residues from the DNA which can arise as a result of misincorporation of dUMP residues by DNA polymerase or due to deamination of cytosine. The protein is Uracil-DNA glycosylase of Oleidesulfovibrio alaskensis (strain ATCC BAA-1058 / DSM 17464 / G20) (Desulfovibrio alaskensis).